The primary structure comprises 810 residues: Probable dehydratase YbiW (810 aa).

The PFL domain occupies 11–682; it reads DRIKAHKNAL…QTMATPDGRK (672 aa). Residues 677-699 are disordered; it reads TPDGRKAHTPLAEGASPASGTDH. In terms of domain architecture, Glycine radical spans 689–810; the sequence is EGASPASGTD…DIIARTEHML (122 aa). Residue Gly786 is modified to Glycine radical.

The protein belongs to the glycyl radical enzyme (GRE) family.

Functionally, probably shows dehydratase activity. The sequence is that of Probable dehydratase YbiW (ybiW) from Escherichia coli (strain K12).